The following is a 94-amino-acid chain: Cell division protein CrgA (94 aa).

2 helical membrane-spanning segments follow: residues 31-51 (VWFV…LLVF) and 71-91 (LGPW…LLTM).

It belongs to the CrgA family.

Its subcellular location is the cell membrane. Functionally, involved in cell division. The sequence is that of Cell division protein CrgA from Mycobacterium sp. (strain JLS).